The primary structure comprises 643 residues: Alpha-dioxygenase PIOX (643 aa).

Residue His-168 is the Proton acceptor of the active site. Residue Asp-169 coordinates Ca(2+). His-173 is a binding site for heme b. Ca(2+) is bound by residues Thr-221, Trp-223, Asp-225, and Ser-227. Heme b contacts are provided by His-393, Arg-490, and Arg-494.

The protein belongs to the peroxidase family. The cofactor is heme b. It depends on Ca(2+) as a cofactor.

It carries out the reaction hexadecanoate + O2 = (2R)-2-hydroperoxyhexadecanoate. The enzyme catalyses dodecanoate + O2 = (2R)-2-hydroperoxydodecanoate. In terms of biological role, alpha-dioxygenase that catalyzes the primary oxygenation step of a variety of 14-20 carbon fatty acids, containing up to three unsaturated bonds, into their corresponding 2R-hydroperoxides. Involved in the production of oxylipins that function in cell signaling, wound healing, and protection from infection. The alpha-oxidation pathway of fatty acids may play a role during plant developmental processes. This is Alpha-dioxygenase PIOX from Pisum sativum (Garden pea).